The primary structure comprises 258 residues: Ribosomal RNA small subunit methyltransferase A (258 aa).

6 residues coordinate S-adenosyl-L-methionine: His13, Leu15, Gly40, Glu61, Asp86, and Asn106.

It belongs to the class I-like SAM-binding methyltransferase superfamily. rRNA adenine N(6)-methyltransferase family. RsmA subfamily.

Its subcellular location is the cytoplasm. It catalyses the reaction adenosine(1518)/adenosine(1519) in 16S rRNA + 4 S-adenosyl-L-methionine = N(6)-dimethyladenosine(1518)/N(6)-dimethyladenosine(1519) in 16S rRNA + 4 S-adenosyl-L-homocysteine + 4 H(+). Functionally, specifically dimethylates two adjacent adenosines (A1518 and A1519) in the loop of a conserved hairpin near the 3'-end of 16S rRNA in the 30S particle. May play a critical role in biogenesis of 30S subunits. The chain is Ribosomal RNA small subunit methyltransferase A from Coxiella burnetii (strain Dugway 5J108-111).